Reading from the N-terminus, the 1068-residue chain is WD repeat-containing protein on Y chromosome (1068 aa).

WD repeat units follow at residues 155 to 199 (DEVT…IRTA), 201 to 242 (SESI…RGPF), 322 to 361 (RIPL…EPSA), 365 to 404 (GHNG…LLQT), 455 to 494 (THAA…RKII), 507 to 546 (IIDI…VVRN), and 594 to 634 (FHTD…RRYS). A disordered region spans residues 657–687 (SKRLASRPTPGNHGLQMGRAGRSTVLNRPED). WD repeat units lie at residues 746–785 (KTGD…VPET) and 829–868 (GHLK…LGTL). The disordered stretch occupies residues 1026 to 1068 (SAINIKQPSRRRSDKTNDTRNVRTPRARDLIALEMSSSHASQS). Basic and acidic residues predominate over residues 1039–1056 (DKTNDTRNVRTPRARDLI).

In Drosophila yakuba (Fruit fly), this protein is WD repeat-containing protein on Y chromosome.